An 877-amino-acid chain; its full sequence is TSET complex member tstB (877 aa).

Disordered stretches follow at residues His-398–Ser-437 and Thr-522–Ile-557. Composition is skewed to low complexity over residues Gly-412–Ser-437 and Ser-529–Ser-556.

Component of the TSET complex, a heterohexamer composed of tstA, tstB, tstC, tstD, tstE and tstF, which may act in plasma membrane turnover. tstA, tstB, tstC and tstD are likely to be the core complex members with tstE and tstF acting as associated scaffold proteins.

This chain is TSET complex member tstB, found in Dictyostelium discoideum (Social amoeba).